The sequence spans 355 residues: Elongation factor Ts (355 aa).

The interval 82–85 (TDFV) is involved in Mg(2+) ion dislocation from EF-Tu.

The protein belongs to the EF-Ts family.

Its subcellular location is the cytoplasm. In terms of biological role, associates with the EF-Tu.GDP complex and induces the exchange of GDP to GTP. It remains bound to the aminoacyl-tRNA.EF-Tu.GTP complex up to the GTP hydrolysis stage on the ribosome. In Helicobacter pylori (strain G27), this protein is Elongation factor Ts.